The primary structure comprises 410 residues: Caspase-1 (410 aa).

In terms of domain architecture, CARD spans 1-91 (MADKVLKGKR…HLAETLGLSS (91 aa)). The propeptide occupies 1 to 119 (MADKVLKGKR…PLPASVNNMP (119 aa)). Residues 88–104 (GLSSSPQSGNSQNTTDS) show a composition bias toward polar residues. Residues 88–125 (GLSSSPQSGNSQNTTDSEVAFPPLPASVNNMPGPAEPE) form a disordered region. Residues His235 and Cys284 contribute to the active site. A propeptide spanning residues 297–322 (SPAAPMDSTSQMGSSLSQVGDNLEDD) is cleaved from the precursor.

Belongs to the peptidase C14A family. As to quaternary structure, heterotetramer that consists of two anti-parallel arranged heterodimers, each one formed by a 20 kDa (Caspase-1 subunit p20) and a 10 kDa (Caspase-1 subunit p10) subunit. May be a component of the inflammasome, a protein complex which also includes PYCARD, CARD8 and NLRP2 and whose function would be the activation of pro-inflammatory caspases. Component of the AIM2 PANoptosome complex, a multiprotein complex that drives inflammatory cell death (PANoptosis). Both the p10 and p20 subunits interact with MEFV. Interacts with CARD17P/INCA and CARD18. Interacts with SERPINB1; this interaction regulates CASP1 activity. Heterotetramer that consists of two anti-parallel arranged heterodimers, each one formed by a 20 kDa (Caspase-1 subunit p20) and a 10 kDa (Caspase-1 subunit p10) subunit. In terms of processing, the two subunits are derived from the precursor sequence by an autocatalytic mechanism. Post-translationally, ubiquitinated via 'Lys-11'-linked polyubiquitination. Deubiquitinated by USP8.

It localises to the cytoplasm. The protein localises to the cell membrane. It carries out the reaction Strict requirement for an Asp residue at position P1 and has a preferred cleavage sequence of Tyr-Val-Ala-Asp-|-.. Thiol protease involved in a variety of inflammatory processes by proteolytically cleaving other proteins, such as the precursors of the inflammatory cytokines interleukin-1 beta (IL1B) and interleukin 18 (IL18) as well as the pyroptosis inducer Gasdermin-D (GSDMD), into active mature peptides. Plays a key role in cell immunity as an inflammatory response initiator: once activated through formation of an inflammasome complex, it initiates a pro-inflammatory response through the cleavage of the two inflammatory cytokines IL1B and IL18, releasing the mature cytokines which are involved in a variety of inflammatory processes. Cleaves a tetrapeptide after an Asp residue at position P1. Also initiates pyroptosis, a programmed lytic cell death pathway, through cleavage of GSDMD. In contrast to cleavage of interleukin IL1B, recognition and cleavage of GSDMD is not strictly dependent on the consensus cleavage site but depends on an exosite interface on CASP1 that recognizes and binds the Gasdermin-D, C-terminal (GSDMD-CT) part. Cleaves and activates CASP7 in response to bacterial infection, promoting plasma membrane repair. Upon inflammasome activation, during DNA virus infection but not RNA virus challenge, controls antiviral immunity through the cleavage of CGAS, rendering it inactive. In apoptotic cells, cleaves SPHK2 which is released from cells and remains enzymatically active extracellularly. This is Caspase-1 (CASP1) from Felis catus (Cat).